Here is a 63-residue protein sequence, read N- to C-terminus: Large ribosomal subunit protein bL28 (63 aa).

It belongs to the bacterial ribosomal protein bL28 family.

The protein is Large ribosomal subunit protein bL28 of Clostridium botulinum (strain ATCC 19397 / Type A).